Here is a 193-residue protein sequence, read N- to C-terminus: Frataxin, mitochondrial (193 aa).

Residues 1–72 (MIFNFLNKAS…KQQQQLSKSF (72 aa)) constitute a mitochondrion transit peptide.

It belongs to the frataxin family. Monomer. Oligomer.

The protein resides in the mitochondrion. The enzyme catalyses 4 Fe(2+) + O2 + 4 H(+) = 4 Fe(3+) + 2 H2O. In terms of biological role, promotes the biosynthesis of heme as well as the assembly and repair of iron-sulfur clusters by delivering Fe(2+) to proteins involved in these pathways. May play a role in the protection against iron-catalyzed oxidative stress through its ability to catalyze the oxidation of Fe(2+) to Fe(3+). May be able to store large amounts of the metal in the form of a ferrihydrite mineral by oligomerization. The polypeptide is Frataxin, mitochondrial (fxn) (Dictyostelium discoideum (Social amoeba)).